The chain runs to 221 residues: Adenylate kinase (221 aa).

Residue 10–15 coordinates ATP; the sequence is GAGKGT. Positions 30–59 are NMP; the sequence is STGDMLRAAVKAGTPLGIEAKKVMDAGGLV. AMP contacts are provided by residues Thr-31, Arg-36, 57–59, 85–88, and Gln-92; these read GLV and GFPR. The interval 122–159 is LID; it reads GRRVHVASGRTYHVKFNPPKADMVDDETGEALIQRDDD. ATP-binding positions include Arg-123 and 132–133; that span reads TY. Residues Arg-156 and Arg-167 each coordinate AMP. Gly-207 contributes to the ATP binding site.

This sequence belongs to the adenylate kinase family. Monomer.

The protein localises to the cytoplasm. It carries out the reaction AMP + ATP = 2 ADP. It participates in purine metabolism; AMP biosynthesis via salvage pathway; AMP from ADP: step 1/1. Its function is as follows. Catalyzes the reversible transfer of the terminal phosphate group between ATP and AMP. Plays an important role in cellular energy homeostasis and in adenine nucleotide metabolism. This Cupriavidus metallidurans (strain ATCC 43123 / DSM 2839 / NBRC 102507 / CH34) (Ralstonia metallidurans) protein is Adenylate kinase.